The chain runs to 175 residues: Peptide deformylase (175 aa).

Fe cation contacts are provided by Cys92 and His134. Glu135 is an active-site residue. Fe cation is bound at residue His138.

The protein belongs to the polypeptide deformylase family. The cofactor is Fe(2+).

The enzyme catalyses N-terminal N-formyl-L-methionyl-[peptide] + H2O = N-terminal L-methionyl-[peptide] + formate. Its function is as follows. Removes the formyl group from the N-terminal Met of newly synthesized proteins. Requires at least a dipeptide for an efficient rate of reaction. N-terminal L-methionine is a prerequisite for activity but the enzyme has broad specificity at other positions. The sequence is that of Peptide deformylase from Blochmanniella floridana.